The primary structure comprises 158 residues: UPF0266 membrane protein YobD (158 aa).

Helical transmembrane passes span 6–26 (LVLI…QFIM), 45–65 (IDSV…VTNH), and 67–87 (ALIT…IFWI).

It belongs to the UPF0266 family.

It localises to the cell inner membrane. This is UPF0266 membrane protein YobD from Shigella boydii serotype 4 (strain Sb227).